The sequence spans 361 residues: Phosphoserine aminotransferase (361 aa).

L-glutamate contacts are provided by serine 9 and arginine 42. Residues 76 to 77, tryptophan 103, threonine 153, aspartate 173, and glutamine 196 each bind pyridoxal 5'-phosphate; that span reads AR. Position 197 is an N6-(pyridoxal phosphate)lysine (lysine 197). 238–239 provides a ligand contact to pyridoxal 5'-phosphate; that stretch reads NT.

Belongs to the class-V pyridoxal-phosphate-dependent aminotransferase family. SerC subfamily. Homodimer. Requires pyridoxal 5'-phosphate as cofactor.

It localises to the cytoplasm. The enzyme catalyses O-phospho-L-serine + 2-oxoglutarate = 3-phosphooxypyruvate + L-glutamate. The catalysed reaction is 4-(phosphooxy)-L-threonine + 2-oxoglutarate = (R)-3-hydroxy-2-oxo-4-phosphooxybutanoate + L-glutamate. Its pathway is amino-acid biosynthesis; L-serine biosynthesis; L-serine from 3-phospho-D-glycerate: step 2/3. It functions in the pathway cofactor biosynthesis; pyridoxine 5'-phosphate biosynthesis; pyridoxine 5'-phosphate from D-erythrose 4-phosphate: step 3/5. Catalyzes the reversible conversion of 3-phosphohydroxypyruvate to phosphoserine and of 3-hydroxy-2-oxo-4-phosphonooxybutanoate to phosphohydroxythreonine. This chain is Phosphoserine aminotransferase, found in Wigglesworthia glossinidia brevipalpis.